The following is a 160-amino-acid chain: RxLR effector protein PexRD44 (160 aa).

An N-terminal signal peptide occupies residues Met1–Ala21. The short motif at Arg54 to Arg76 is the RxLR-dEER element.

It belongs to the RxLR effector family.

It localises to the secreted. The protein localises to the host cell membrane. It is found in the host nucleus. The protein resides in the host nucleolus. Its function is as follows. Effector that is involved in host plant infection. Contributes to virulence during the early infection stage, by inhibiting plant defense responses induced by both PAMP-triggered immunity (PTI) and effector-triggered immunity (ETI). This chain is RxLR effector protein PexRD44, found in Phytophthora infestans (strain T30-4) (Potato late blight agent).